Here is a 130-residue protein sequence, read N- to C-terminus: Small ribosomal subunit protein uS9 (130 aa).

The disordered stretch occupies residues 98-130 (LKRAGLLTRDPRMKERKKPGLKKARRSPQFSKR). Residues 111-130 (KERKKPGLKKARRSPQFSKR) show a composition bias toward basic residues.

Belongs to the universal ribosomal protein uS9 family.

This chain is Small ribosomal subunit protein uS9, found in Staphylococcus epidermidis (strain ATCC 35984 / DSM 28319 / BCRC 17069 / CCUG 31568 / BM 3577 / RP62A).